Reading from the N-terminus, the 192-residue chain is Riboflavin kinase (192 aa).

Mg(2+) contacts are provided by T47 and N49. The active-site Nucleophile is the E129.

Belongs to the flavokinase family. The cofactor is Zn(2+). Mg(2+) serves as cofactor.

It carries out the reaction riboflavin + ATP = FMN + ADP + H(+). The protein operates within cofactor biosynthesis; FMN biosynthesis; FMN from riboflavin (ATP route): step 1/1. Functionally, catalyzes the phosphorylation of riboflavin (vitamin B2) to form flavin mononucleotide (FMN) coenzyme. The polypeptide is Riboflavin kinase (FMN1) (Yarrowia lipolytica (strain CLIB 122 / E 150) (Yeast)).